A 67-amino-acid chain; its full sequence is Conotoxin Cal6.35 (67 aa).

The signal sequence occupies residues 1–22 (MKLTCVLIVAVLILTACQVIAA). Cystine bridges form between Cys-43/Cys-53, Cys-46/Cys-59, and Cys-52/Cys-66.

Belongs to the conotoxin O1 superfamily. Expressed by the venom duct.

The protein resides in the secreted. Functionally, probable neurotoxin. This Californiconus californicus (California cone) protein is Conotoxin Cal6.35.